The primary structure comprises 246 residues: Pyridoxine 5'-phosphate synthase (246 aa).

Residue asparagine 12 coordinates 3-amino-2-oxopropyl phosphate. Residue 14–15 (DH) participates in 1-deoxy-D-xylulose 5-phosphate binding. Arginine 23 contacts 3-amino-2-oxopropyl phosphate. Histidine 48 serves as the catalytic Proton acceptor. 1-deoxy-D-xylulose 5-phosphate contacts are provided by arginine 50 and histidine 55. Glutamate 75 serves as the catalytic Proton acceptor. Residue threonine 105 coordinates 1-deoxy-D-xylulose 5-phosphate. Catalysis depends on histidine 196, which acts as the Proton donor. 3-amino-2-oxopropyl phosphate-binding positions include glycine 197 and 218–219 (GH).

It belongs to the PNP synthase family. In terms of assembly, homooctamer; tetramer of dimers.

The protein resides in the cytoplasm. It carries out the reaction 3-amino-2-oxopropyl phosphate + 1-deoxy-D-xylulose 5-phosphate = pyridoxine 5'-phosphate + phosphate + 2 H2O + H(+). It participates in cofactor biosynthesis; pyridoxine 5'-phosphate biosynthesis; pyridoxine 5'-phosphate from D-erythrose 4-phosphate: step 5/5. Functionally, catalyzes the complicated ring closure reaction between the two acyclic compounds 1-deoxy-D-xylulose-5-phosphate (DXP) and 3-amino-2-oxopropyl phosphate (1-amino-acetone-3-phosphate or AAP) to form pyridoxine 5'-phosphate (PNP) and inorganic phosphate. This chain is Pyridoxine 5'-phosphate synthase, found in Pseudomonas syringae pv. syringae (strain B728a).